The sequence spans 277 residues: MIWPFKTSTRKKIARIEVTGAIASGTRKAVLKALKTVEEKKYPALLVRIDSPGGTVVDSQEIYTKLKQLSEKIKVVASFGNISASGGVYIAMGCPHIMANSGTITGSIGVILRGNNLERLLEKVGVSFKVIKSGPYKDILSFDRELLPEEQSILQALIDDSYGQFVSTVAAGRNLAVEKVKEFADGRIFTGQQALELGLVDRLGTEEDARQWAATLAGLDPDKVELDTIEDPKPLVRRLTGGDSQLQTMADNLGLTESLKWCEFELSTSGQPLWLYR.

Catalysis depends on Ser-85, which acts as the Nucleophile. Catalysis depends on Lys-137, which acts as the Proton donor/acceptor.

The protein belongs to the peptidase S49 family.

The sequence is that of Putative protease slr0021 from Synechocystis sp. (strain ATCC 27184 / PCC 6803 / Kazusa).